The sequence spans 495 residues: Aspartyl/glutamyl-tRNA(Asn/Gln) amidotransferase subunit B (495 aa).

The protein belongs to the GatB/GatE family. GatB subfamily. Heterotrimer of A, B and C subunits.

The enzyme catalyses L-glutamyl-tRNA(Gln) + L-glutamine + ATP + H2O = L-glutaminyl-tRNA(Gln) + L-glutamate + ADP + phosphate + H(+). It catalyses the reaction L-aspartyl-tRNA(Asn) + L-glutamine + ATP + H2O = L-asparaginyl-tRNA(Asn) + L-glutamate + ADP + phosphate + 2 H(+). Allows the formation of correctly charged Asn-tRNA(Asn) or Gln-tRNA(Gln) through the transamidation of misacylated Asp-tRNA(Asn) or Glu-tRNA(Gln) in organisms which lack either or both of asparaginyl-tRNA or glutaminyl-tRNA synthetases. The reaction takes place in the presence of glutamine and ATP through an activated phospho-Asp-tRNA(Asn) or phospho-Glu-tRNA(Gln). In Rippkaea orientalis (strain PCC 8801 / RF-1) (Cyanothece sp. (strain PCC 8801)), this protein is Aspartyl/glutamyl-tRNA(Asn/Gln) amidotransferase subunit B.